The sequence spans 529 residues: Bifunctional purine biosynthesis protein PurH (529 aa).

The 148-residue stretch at 2–149 (TDLSPVRRAL…KNHAFVNVVV (148 aa)) folds into the MGS-like domain.

The protein belongs to the PurH family.

The catalysed reaction is (6R)-10-formyltetrahydrofolate + 5-amino-1-(5-phospho-beta-D-ribosyl)imidazole-4-carboxamide = 5-formamido-1-(5-phospho-D-ribosyl)imidazole-4-carboxamide + (6S)-5,6,7,8-tetrahydrofolate. It catalyses the reaction IMP + H2O = 5-formamido-1-(5-phospho-D-ribosyl)imidazole-4-carboxamide. It participates in purine metabolism; IMP biosynthesis via de novo pathway; 5-formamido-1-(5-phospho-D-ribosyl)imidazole-4-carboxamide from 5-amino-1-(5-phospho-D-ribosyl)imidazole-4-carboxamide (10-formyl THF route): step 1/1. Its pathway is purine metabolism; IMP biosynthesis via de novo pathway; IMP from 5-formamido-1-(5-phospho-D-ribosyl)imidazole-4-carboxamide: step 1/1. The protein is Bifunctional purine biosynthesis protein PurH of Ruegeria pomeroyi (strain ATCC 700808 / DSM 15171 / DSS-3) (Silicibacter pomeroyi).